The following is a 988-amino-acid chain: Kinesin-like protein CIN8 (988 aa).

The Kinesin motor domain occupies Asn33–Ile470. Gly125–Thr132 contacts ATP. Positions Phe206–Ser301 are disordered. Residues Ser208–Arg237 show a composition bias toward low complexity. Over residues His248–Ser280 the composition is skewed to polar residues. The segment covering Asn281 to Ser301 has biased composition (low complexity). Coiled coils occupy residues Glu514–Gln619 and Lys707–Phe769. Positions Ala965–Asp974 are enriched in basic and acidic residues. The tract at residues Ala965–Asp988 is disordered.

Belongs to the TRAFAC class myosin-kinesin ATPase superfamily. Kinesin family. BimC subfamily.

It localises to the cytoplasm. The protein localises to the cytoskeleton. Its subcellular location is the spindle. Elongates the mitotic spindle by interacting with spindle microtubules to generate an outward force pushing spindle poles apart. Following spindle assembly, CIN8 and KIP1 apparently act to oppose a force, possibly generated by KAR3, that draws separated poles back together. The chain is Kinesin-like protein CIN8 (CIN8) from Candida glabrata (strain ATCC 2001 / BCRC 20586 / JCM 3761 / NBRC 0622 / NRRL Y-65 / CBS 138) (Yeast).